We begin with the raw amino-acid sequence, 126 residues long: UPF0102 protein MXAN_3551 (126 aa).

Belongs to the UPF0102 family.

The chain is UPF0102 protein MXAN_3551 from Myxococcus xanthus (strain DK1622).